Reading from the N-terminus, the 269-residue chain is Undecaprenyl-diphosphatase (269 aa).

The next 7 helical transmembrane spans lie at 42–62 (WDTF…ALYF), 83–103 (LTVL…HGVI), 110–130 (PYLP…LLVV), 142–162 (GMAL…LSLL), 186–206 (AEFS…LDLL), 219–239 (AIAI…KFLI), and 247–267 (FTPF…LIYI).

The protein belongs to the UppP family.

Its subcellular location is the cell inner membrane. The catalysed reaction is di-trans,octa-cis-undecaprenyl diphosphate + H2O = di-trans,octa-cis-undecaprenyl phosphate + phosphate + H(+). In terms of biological role, catalyzes the dephosphorylation of undecaprenyl diphosphate (UPP). Confers resistance to bacitracin. This Caulobacter sp. (strain K31) protein is Undecaprenyl-diphosphatase.